Consider the following 206-residue polypeptide: Thymidylate kinase (206 aa).

Residue 11 to 18 coordinates ATP; sequence GIDGAGKT.

This sequence belongs to the thymidylate kinase family.

The enzyme catalyses dTMP + ATP = dTDP + ADP. Its function is as follows. Phosphorylation of dTMP to form dTDP in both de novo and salvage pathways of dTTP synthesis. This Burkholderia ambifaria (strain MC40-6) protein is Thymidylate kinase.